The following is a 432-amino-acid chain: MTVKAAEASGPALTYSKMRGMVAILIAFMKQRRMGLNDFIQKIATNSYACKHPEVQSILKISQPQEPELMNANPSPPPSPSQQINLGPSSNPHAKPSDFHFLKVIGKGSFGKVLLARHKAEEQFYAVKVLQKKAILKKKEEKHIMSERNVLLKNVKHPFLVGLHFSFQTADKLYFVLDYINGGELFYHLQRERCFLEPRARFYAAEIASALGYLHSLNIVYRDLKPENILLDSQGHIVLTDFGLCKENIEHNGTTSTFCGTPEYLAPEVLHKQPYDRTVDWWCLGAVLYEMLYGLPPFYSRNTAEMYDNILNKPLQLKPNITNSARHLLEGLLQKDRTKRLGAKEDFTEIKNHIFFSPINWDDLINKKITPPFNPNVSGPSDLRHFDPEFTDEPVPNSIGQSPDSILITASVKEAAEAFLGFSYAPPVDSFL.

Positions 67–93 (PELMNANPSPPPSPSQQINLGPSSNPH) are disordered. Over residues 82–92 (QQINLGPSSNP) the composition is skewed to polar residues. In terms of domain architecture, Protein kinase spans 99 to 356 (FHFLKVIGKG…FTEIKNHIFF (258 aa)). ATP contacts are provided by residues 105 to 113 (IGKGSFGKV) and lysine 128. Aspartate 223 functions as the Proton acceptor in the catalytic mechanism. The region spanning 357 to 432 (SPINWDDLIN…SYAPPVDSFL (76 aa)) is the AGC-kinase C-terminal domain.

It belongs to the protein kinase superfamily. AGC Ser/Thr protein kinase family.

It is found in the cytoplasm. The protein resides in the nucleus. Its subcellular location is the endoplasmic reticulum. The catalysed reaction is L-seryl-[protein] + ATP = O-phospho-L-seryl-[protein] + ADP + H(+). It carries out the reaction L-threonyl-[protein] + ATP = O-phospho-L-threonyl-[protein] + ADP + H(+). Functionally, protein kinase that may play an important role in cellular stress response. May be involved in the regulation of processes such as cell survival, neuronal excitability and renal sodium excretion. This Gallus gallus (Chicken) protein is Serine/threonine-protein kinase Sgk1 (SGK1).